Reading from the N-terminus, the 45-residue chain is C-phycocyanin beta subunit (45 aa).

It belongs to the phycobiliprotein family. In terms of assembly, heterodimer of an alpha and a beta subunit. The hererodimer further assembles into trimers and the trimers into hexamers. In terms of processing, contains two covalently linked bilin chromophores.

The protein localises to the cellular thylakoid membrane. In terms of biological role, light-harvesting photosynthetic bile pigment-protein from the phycobiliprotein complex (phycobilisome, PBS). Phycocyanin is the major phycobiliprotein in the PBS rod. The protein is C-phycocyanin beta subunit (cpcB) of Limnospira fusiformis (Arthrospira fusiformis).